A 227-amino-acid polypeptide reads, in one-letter code: PKHD-type hydroxylase Bcen_3557 (227 aa).

Residues 78-178 enclose the Fe2OG dioxygenase domain; the sequence is KVFPPLFNRY…RVASFFWIQS (101 aa). The Fe cation site is built by H96, D98, and H159. Position 169 (R169) interacts with 2-oxoglutarate.

Fe(2+) serves as cofactor. The cofactor is L-ascorbate.

The protein is PKHD-type hydroxylase Bcen_3557 of Burkholderia orbicola (strain AU 1054).